A 638-amino-acid polypeptide reads, in one-letter code: Chaperone protein DnaK (638 aa).

Threonine 197 carries the post-translational modification Phosphothreonine; by autocatalysis. A disordered region spans residues 600–638 (SGAQGGAQAGPGAGAGQQANQGSSNNKEDIQDADFEEVK). Gly residues predominate over residues 602–614 (AQGGAQAGPGAGA). A compositionally biased stretch (low complexity) spans 615-624 (GQQANQGSSN). Positions 625–638 (NKEDIQDADFEEVK) are enriched in basic and acidic residues.

It belongs to the heat shock protein 70 family.

In terms of biological role, acts as a chaperone. This Phocaeicola vulgatus (strain ATCC 8482 / DSM 1447 / JCM 5826 / CCUG 4940 / NBRC 14291 / NCTC 11154) (Bacteroides vulgatus) protein is Chaperone protein DnaK.